Reading from the N-terminus, the 108-residue chain is Cell wall protein PGA48 (108 aa).

The first 17 residues, 1–17 (MFKFVIYLFTFIAFANA), serve as a signal peptide directing secretion. Residues Asn18, Asn41, and Asn77 are each glycosylated (N-linked (GlcNAc...) asparagine). The GPI-anchor amidated asparagine moiety is linked to residue Asn84. Positions 85–108 (GASKLNLRSLAGAGLVAAIFIAFI) are cleaved as a propeptide — removed in mature form.

The protein belongs to the SED1 family. The GPI-anchor is attached to the protein in the endoplasmic reticulum and serves to target the protein to the cell surface. There, the glucosamine-inositol phospholipid moiety is cleaved off and the GPI-modified mannoprotein is covalently attached via its lipidless GPI glycan remnant to the 1,6-beta-glucan of the outer cell wall layer.

The protein localises to the secreted. It localises to the cell wall. Its subcellular location is the membrane. Its function is as follows. Cell wall protein that plays a role in adaptation and resistance to cell wall stress. This chain is Cell wall protein PGA48 (PGA48), found in Candida albicans (strain SC5314 / ATCC MYA-2876) (Yeast).